The chain runs to 326 residues: Type II secretion system protein K (326 aa).

Positions 1-7 are cleaved as a propeptide — leader sequence; sequence MNHRQRG. Residues 8 to 28 traverse the membrane as a helical segment; that stretch reads IALLMVLLILALMMVLASAMT. The Periplasmic segment spans residues 29–326; the sequence is ERSARMYQQT…RYGIYWVADE (298 aa).

Belongs to the GSP K family. In terms of assembly, type II secretion is composed of four main components: the outer membrane complex, the inner membrane complex, the cytoplasmic secretion ATPase and the periplasm-spanning pseudopilus. Interacts with core component PulG. Post-translationally, cleaved by prepilin peptidase.

The protein resides in the cell inner membrane. Functionally, component of the type II secretion system required for the energy-dependent secretion of extracellular factors such as proteases and toxins from the periplasm. Plays a role in pseudopilus assembly and seems to control its length. Interacts with the pseudopilus tip complex that is critical for the recognition and binding of secretion substrates. The chain is Type II secretion system protein K (pulK) from Klebsiella pneumoniae.